Reading from the N-terminus, the 252-residue chain is Adenosylcobinamide-GDP ribazoletransferase (252 aa).

7 consecutive transmembrane segments (helical) span residues Gly34–Lys54, Leu55–Val75, Tyr113–Val133, Leu138–Gly158, Ile174–Met194, Phe198–Phe218, and Leu230–Ile250.

The protein belongs to the CobS family. Mg(2+) serves as cofactor.

It is found in the cell membrane. It carries out the reaction alpha-ribazole + adenosylcob(III)inamide-GDP = adenosylcob(III)alamin + GMP + H(+). The catalysed reaction is alpha-ribazole 5'-phosphate + adenosylcob(III)inamide-GDP = adenosylcob(III)alamin 5'-phosphate + GMP + H(+). The protein operates within cofactor biosynthesis; adenosylcobalamin biosynthesis; adenosylcobalamin from cob(II)yrinate a,c-diamide: step 7/7. In terms of biological role, joins adenosylcobinamide-GDP and alpha-ribazole to generate adenosylcobalamin (Ado-cobalamin). Also synthesizes adenosylcobalamin 5'-phosphate from adenosylcobinamide-GDP and alpha-ribazole 5'-phosphate. This is Adenosylcobinamide-GDP ribazoletransferase from Clostridium kluyveri (strain NBRC 12016).